Reading from the N-terminus, the 217-residue chain is Pyridoxine/pyridoxamine 5'-phosphate oxidase (217 aa).

FMN contacts are provided by residues 66–71 (RMVLLK), 81–82 (FT), R87, K88, and Q110. K71 contributes to the substrate binding site. The substrate site is built by Y128, R132, and S136. FMN contacts are provided by residues 145 to 146 (QS) and W190. 196–198 (RLH) contacts substrate. An FMN-binding site is contributed by R200.

It belongs to the pyridoxamine 5'-phosphate oxidase family. As to quaternary structure, homodimer. FMN is required as a cofactor.

The enzyme catalyses pyridoxamine 5'-phosphate + O2 + H2O = pyridoxal 5'-phosphate + H2O2 + NH4(+). The catalysed reaction is pyridoxine 5'-phosphate + O2 = pyridoxal 5'-phosphate + H2O2. It functions in the pathway cofactor metabolism; pyridoxal 5'-phosphate salvage; pyridoxal 5'-phosphate from pyridoxamine 5'-phosphate: step 1/1. It participates in cofactor metabolism; pyridoxal 5'-phosphate salvage; pyridoxal 5'-phosphate from pyridoxine 5'-phosphate: step 1/1. In terms of biological role, catalyzes the oxidation of either pyridoxine 5'-phosphate (PNP) or pyridoxamine 5'-phosphate (PMP) into pyridoxal 5'-phosphate (PLP). The sequence is that of Pyridoxine/pyridoxamine 5'-phosphate oxidase from Colwellia psychrerythraea (strain 34H / ATCC BAA-681) (Vibrio psychroerythus).